Reading from the N-terminus, the 1858-residue chain is Protein ROS1C (1858 aa).

The span at 347 to 356 (TEALKGEDAP) shows a compositional bias: basic and acidic residues. 2 disordered regions span residues 347 to 416 (TEAL…AEPF) and 1288 to 1309 (PDTA…KNSE). 2 stretches are compositionally biased toward basic residues: residues 360–370 (LKTRRRKHRPK) and 394–404 (KPKRKYVRKNR). [4Fe-4S] cluster-binding residues include Cys-1492, Cys-1499, Cys-1502, and Cys-1508.

Belongs to the DNA glycosylase family. DEMETER subfamily. Requires [4Fe-4S] cluster as cofactor. In terms of tissue distribution, expressed in pistils and immature seeds. Expressed a low levels in roots, leaves and anthers.

Its subcellular location is the nucleus. Bifunctional DNA glycosylase/lyase, which excises 5-methylcytosine (5-meC) and 5-hydroxymethylcytosine (5-hmeC), leaving an apyrimidinic (AP) site that is subsequently incised by the lyase activity. Is responsible for the demethylation of methylated cytosine residues of Tos17 retrotransposon DNA. Demethylation of Tos17 cytosine residues promotes its transposition. May be involved in seed development. The polypeptide is Protein ROS1C (Oryza sativa subsp. japonica (Rice)).